A 487-amino-acid polypeptide reads, in one-letter code: Aspartyl/glutamyl-tRNA(Asn/Gln) amidotransferase subunit B (487 aa).

Belongs to the GatB/GatE family. GatB subfamily. As to quaternary structure, heterotrimer of A, B and C subunits.

The catalysed reaction is L-glutamyl-tRNA(Gln) + L-glutamine + ATP + H2O = L-glutaminyl-tRNA(Gln) + L-glutamate + ADP + phosphate + H(+). It catalyses the reaction L-aspartyl-tRNA(Asn) + L-glutamine + ATP + H2O = L-asparaginyl-tRNA(Asn) + L-glutamate + ADP + phosphate + 2 H(+). Functionally, allows the formation of correctly charged Asn-tRNA(Asn) or Gln-tRNA(Gln) through the transamidation of misacylated Asp-tRNA(Asn) or Glu-tRNA(Gln) in organisms which lack either or both of asparaginyl-tRNA or glutaminyl-tRNA synthetases. The reaction takes place in the presence of glutamine and ATP through an activated phospho-Asp-tRNA(Asn) or phospho-Glu-tRNA(Gln). The chain is Aspartyl/glutamyl-tRNA(Asn/Gln) amidotransferase subunit B from Leptospira biflexa serovar Patoc (strain Patoc 1 / Ames).